Consider the following 386-residue polypeptide: Succinate--CoA ligase [ADP-forming] subunit beta (386 aa).

The ATP-grasp domain maps to 9 to 244 (KEILRSYGVS…LDEEDPKEVE (236 aa)). ATP is bound by residues Lys-46, 53–55 (GRG), Glu-99, Cys-102, and Glu-107. Mg(2+)-binding residues include Asn-199 and Asp-213. Substrate contacts are provided by residues Asn-264 and 321–323 (GIM).

It belongs to the succinate/malate CoA ligase beta subunit family. In terms of assembly, heterotetramer of two alpha and two beta subunits. Mg(2+) is required as a cofactor.

It carries out the reaction succinate + ATP + CoA = succinyl-CoA + ADP + phosphate. It catalyses the reaction GTP + succinate + CoA = succinyl-CoA + GDP + phosphate. Its pathway is carbohydrate metabolism; tricarboxylic acid cycle; succinate from succinyl-CoA (ligase route): step 1/1. Its function is as follows. Succinyl-CoA synthetase functions in the citric acid cycle (TCA), coupling the hydrolysis of succinyl-CoA to the synthesis of either ATP or GTP and thus represents the only step of substrate-level phosphorylation in the TCA. The beta subunit provides nucleotide specificity of the enzyme and binds the substrate succinate, while the binding sites for coenzyme A and phosphate are found in the alpha subunit. This is Succinate--CoA ligase [ADP-forming] subunit beta from Geobacillus thermodenitrificans (strain NG80-2).